A 378-amino-acid chain; its full sequence is TelA-like protein SAUSA300_1299 (378 aa).

This sequence belongs to the TelA family.

This Staphylococcus aureus (strain USA300) protein is TelA-like protein SAUSA300_1299.